A 290-amino-acid polypeptide reads, in one-letter code: Forkhead box protein O3B (290 aa).

Disordered regions lie at residues 1 to 30 (METDLAEMPEKGVLSSQDSPHFQEKSTEEG) and 44 to 239 (AAAA…SSRR). Low complexity-rich tracts occupy residues 44-59 (AAAAAAPGSRSLRGVH) and 75-91 (RTPAAAGRAAKMAEAPA). Threonine 117 bears the Phosphothreonine; by PKB/AKT1 mark. The span at 142–153 (IPEEEDDEDDED) shows a compositional bias: acidic residues. A DNA-binding region (fork-head) is located at residues 242–290 (WGNLSYADLITRAIESSPDRRLTLSQIYEWMVSCVPYFKDKGNSNSSAG).

The protein resides in the cytoplasm. Its subcellular location is the cytosol. Transcription factor. The sequence is that of Forkhead box protein O3B from Homo sapiens (Human).